The chain runs to 527 residues: Bifunctional purine biosynthesis protein PurH (527 aa).

In terms of domain architecture, MGS-like spans 1–149; sequence MTADLLPVRR…KNFARVAVAT (149 aa).

It belongs to the PurH family.

The catalysed reaction is (6R)-10-formyltetrahydrofolate + 5-amino-1-(5-phospho-beta-D-ribosyl)imidazole-4-carboxamide = 5-formamido-1-(5-phospho-D-ribosyl)imidazole-4-carboxamide + (6S)-5,6,7,8-tetrahydrofolate. The enzyme catalyses IMP + H2O = 5-formamido-1-(5-phospho-D-ribosyl)imidazole-4-carboxamide. It functions in the pathway purine metabolism; IMP biosynthesis via de novo pathway; 5-formamido-1-(5-phospho-D-ribosyl)imidazole-4-carboxamide from 5-amino-1-(5-phospho-D-ribosyl)imidazole-4-carboxamide (10-formyl THF route): step 1/1. The protein operates within purine metabolism; IMP biosynthesis via de novo pathway; IMP from 5-formamido-1-(5-phospho-D-ribosyl)imidazole-4-carboxamide: step 1/1. The protein is Bifunctional purine biosynthesis protein PurH of Stenotrophomonas maltophilia (strain R551-3).